The chain runs to 950 residues: Translation initiation factor IF-2 (950 aa).

Disordered stretches follow at residues 69–92 (KTKT…AGKA) and 128–352 (KPKV…SNVP). Basic and acidic residues-rich tracts occupy residues 77-86 (AKSKQEDHPR), 128-158 (KPKV…EAKA), 165-186 (AEVK…EKKK), 200-234 (KRAE…DNRR), and 291-312 (NRRD…DGNR). Composition is skewed to polar residues over residues 322 to 336 (NRNQ…NWNQ) and 343 to 352 (YQNNQSSNVP). The 172-residue stretch at 448 to 619 (ERPAVVTIMG…LLVAEVQELK (172 aa)) folds into the tr-type G domain. Residues 457–464 (GHVDHGKT) form a G1 region. 457 to 464 (GHVDHGKT) provides a ligand contact to GTP. The G2 stretch occupies residues 482–486 (GITQH). The G3 stretch occupies residues 503–506 (DTPG). Residues 503–507 (DTPGH) and 557–560 (NKID) contribute to the GTP site. Residues 557–560 (NKID) form a G4 region. A G5 region spans residues 595 to 597 (SAK).

Belongs to the TRAFAC class translation factor GTPase superfamily. Classic translation factor GTPase family. IF-2 subfamily.

The protein localises to the cytoplasm. One of the essential components for the initiation of protein synthesis. Protects formylmethionyl-tRNA from spontaneous hydrolysis and promotes its binding to the 30S ribosomal subunits. Also involved in the hydrolysis of GTP during the formation of the 70S ribosomal complex. This is Translation initiation factor IF-2 from Lactococcus lactis subsp. cremoris (strain SK11).